The following is a 477-amino-acid chain: Pyruvate kinase (477 aa).

Residue R34 participates in substrate binding. Residues N36, D64, and T65 each coordinate K(+). Residue N36–H39 coordinates ATP. ATP is bound by residues R71 and K150. Mg(2+) is bound at residue E216. The substrate site is built by G239, D240, and T272. D240 serves as a coordination point for Mg(2+).

The protein belongs to the pyruvate kinase family. In terms of assembly, homotetramer. Mg(2+) is required as a cofactor. It depends on K(+) as a cofactor.

It carries out the reaction pyruvate + ATP = phosphoenolpyruvate + ADP + H(+). It participates in carbohydrate degradation; glycolysis; pyruvate from D-glyceraldehyde 3-phosphate: step 5/5. This Borreliella burgdorferi (strain ATCC 35210 / DSM 4680 / CIP 102532 / B31) (Borrelia burgdorferi) protein is Pyruvate kinase (pyk).